The chain runs to 433 residues: Trigger factor (433 aa).

The PPIase FKBP-type domain occupies 163–248; the sequence is GDVVVLDFAA…VHAVKERRLP (86 aa).

This sequence belongs to the FKBP-type PPIase family. Tig subfamily.

The protein localises to the cytoplasm. The catalysed reaction is [protein]-peptidylproline (omega=180) = [protein]-peptidylproline (omega=0). In terms of biological role, involved in protein export. Acts as a chaperone by maintaining the newly synthesized protein in an open conformation. Functions as a peptidyl-prolyl cis-trans isomerase. The sequence is that of Trigger factor from Nitratidesulfovibrio vulgaris (strain ATCC 29579 / DSM 644 / CCUG 34227 / NCIMB 8303 / VKM B-1760 / Hildenborough) (Desulfovibrio vulgaris).